The sequence spans 457 residues: Multidrug resistance protein MdtK (457 aa).

The next 12 helical transmembrane spans lie at 11–31 (LLAL…MGFV), 53–73 (IWLP…PVIA), 93–113 (WLAG…GYII), 127–147 (AVGY…FQVA), 160–180 (GMVM…IFIY), 188–208 (LGGI…FIAM), 243–263 (LPIA…ALLV), 276–296 (IALN…AAVT), 314–334 (AART…IFTV), 350–370 (VVAL…SDSI), 387–407 (IFFI…YILA), and 418–438 (PAGF…LMML).

Belongs to the multi antimicrobial extrusion (MATE) (TC 2.A.66.1) family. MdtK subfamily.

Its subcellular location is the cell inner membrane. Its function is as follows. Multidrug efflux pump that functions probably as a Na(+)/drug antiporter. In Salmonella heidelberg (strain SL476), this protein is Multidrug resistance protein MdtK.